The following is a 287-amino-acid chain: Succinate--CoA ligase [ADP-forming] subunit alpha 2 (287 aa).

Residues 17–20, Lys43, and 96–98 contribute to the CoA site; these read TGYQ and ITE. Residue Tyr159 participates in substrate binding. Catalysis depends on His246, which acts as the Tele-phosphohistidine intermediate.

This sequence belongs to the succinate/malate CoA ligase alpha subunit family. In terms of assembly, heterotetramer of two alpha and two beta subunits.

The enzyme catalyses succinate + ATP + CoA = succinyl-CoA + ADP + phosphate. The catalysed reaction is GTP + succinate + CoA = succinyl-CoA + GDP + phosphate. It participates in carbohydrate metabolism; tricarboxylic acid cycle; succinate from succinyl-CoA (ligase route): step 1/1. In terms of biological role, succinyl-CoA synthetase functions in the citric acid cycle (TCA), coupling the hydrolysis of succinyl-CoA to the synthesis of either ATP or GTP and thus represents the only step of substrate-level phosphorylation in the TCA. The alpha subunit of the enzyme binds the substrates coenzyme A and phosphate, while succinate binding and nucleotide specificity is provided by the beta subunit. This chain is Succinate--CoA ligase [ADP-forming] subunit alpha 2, found in Archaeoglobus fulgidus (strain ATCC 49558 / DSM 4304 / JCM 9628 / NBRC 100126 / VC-16).